The primary structure comprises 165 residues: Phosphopantetheine adenylyltransferase (165 aa).

Serine 10 serves as a coordination point for substrate. ATP contacts are provided by residues 10 to 11 (SF) and histidine 18. Substrate contacts are provided by lysine 42, threonine 79, and arginine 93. Residues 94–96 (GLR), glutamate 104, and 129–135 (VRPITAT) each bind ATP.

The protein belongs to the bacterial CoaD family. In terms of assembly, homohexamer. Mg(2+) is required as a cofactor.

Its subcellular location is the cytoplasm. It carries out the reaction (R)-4'-phosphopantetheine + ATP + H(+) = 3'-dephospho-CoA + diphosphate. It participates in cofactor biosynthesis; coenzyme A biosynthesis; CoA from (R)-pantothenate: step 4/5. Functionally, reversibly transfers an adenylyl group from ATP to 4'-phosphopantetheine, yielding dephospho-CoA (dPCoA) and pyrophosphate. The protein is Phosphopantetheine adenylyltransferase of Nitrobacter hamburgensis (strain DSM 10229 / NCIMB 13809 / X14).